Consider the following 439-residue polypeptide: Alpha-1,3-mannosyl-glycoprotein 4-beta-N-acetylglucosaminyltransferase-like protein MGAT4E (439 aa).

It participates in protein modification; protein glycosylation. In terms of biological role, glycosyltransferase-like protein that may participate in the transfer of N-acetylglucosamine (GlcNAc) to the core mannose residues of N-linked glycans. This Mus musculus (Mouse) protein is Alpha-1,3-mannosyl-glycoprotein 4-beta-N-acetylglucosaminyltransferase-like protein MGAT4E.